Here is a 374-residue protein sequence, read N- to C-terminus: Isocitrate dehydrogenase [NAD] catalytic subunit 5, mitochondrial (374 aa).

Residues 1–44 (MTMAANLARRLIGNRSTQILGAVNSSSGAASSVARAFCSSTTPI) constitute a mitochondrion transit peptide. 4 residues coordinate substrate: R127, R137, R158, and D245. Positions 245, 269, and 273 each coordinate Mg(2+).

This sequence belongs to the isocitrate and isopropylmalate dehydrogenases family. In terms of assembly, heterooligomer of catalytic and regulatory subunits. Mg(2+) serves as cofactor. It depends on Mn(2+) as a cofactor. In terms of tissue distribution, ubiquitous.

The protein resides in the mitochondrion. It catalyses the reaction D-threo-isocitrate + NAD(+) = 2-oxoglutarate + CO2 + NADH. Functionally, performs an essential role in the oxidative function of the citric acid cycle. This is Isocitrate dehydrogenase [NAD] catalytic subunit 5, mitochondrial (IDH5) from Arabidopsis thaliana (Mouse-ear cress).